We begin with the raw amino-acid sequence, 862 residues long: Leucine--tRNA ligase (862 aa).

The 'HIGH' region motif lies at 42-52 (PYPSGKIHIGH). The 'KMSKS' region motif lies at 614–618 (KMSKS). An ATP-binding site is contributed by K617.

This sequence belongs to the class-I aminoacyl-tRNA synthetase family.

It is found in the cytoplasm. The enzyme catalyses tRNA(Leu) + L-leucine + ATP = L-leucyl-tRNA(Leu) + AMP + diphosphate. This is Leucine--tRNA ligase from Syntrophus aciditrophicus (strain SB).